The chain runs to 220 residues: Nicotinamidase (220 aa).

The active site involves Asp11. Zn(2+) contacts are provided by Asp53, His55, and His94. Lys119 is a catalytic residue. Cys163 (nucleophile) is an active-site residue.

The protein belongs to the isochorismatase family.

It localises to the cytoplasm. The protein resides in the nucleus. Its subcellular location is the peroxisome. It carries out the reaction nicotinamide + H2O = nicotinate + NH4(+). It participates in cofactor biosynthesis; nicotinate biosynthesis; nicotinate from nicotinamide: step 1/1. Functionally, catalyzes the deamidation of nicotinamide, an early step in the NAD(+) salvage pathway. The sequence is that of Nicotinamidase (pnc1) from Schizosaccharomyces pombe (strain 972 / ATCC 24843) (Fission yeast).